The sequence spans 306 residues: Homoserine kinase (306 aa).

95 to 105 (PHSRGLGSSAA) is an ATP binding site.

This sequence belongs to the GHMP kinase family. Homoserine kinase subfamily.

Its subcellular location is the cytoplasm. The catalysed reaction is L-homoserine + ATP = O-phospho-L-homoserine + ADP + H(+). Its pathway is amino-acid biosynthesis; L-threonine biosynthesis; L-threonine from L-aspartate: step 4/5. Catalyzes the ATP-dependent phosphorylation of L-homoserine to L-homoserine phosphate. The chain is Homoserine kinase from Mycobacteroides abscessus (strain ATCC 19977 / DSM 44196 / CCUG 20993 / CIP 104536 / JCM 13569 / NCTC 13031 / TMC 1543 / L948) (Mycobacterium abscessus).